Reading from the N-terminus, the 359-residue chain is Peptide chain release factor 1 (359 aa).

Q235 is subject to N5-methylglutamine. The segment covering 282 to 307 has biased composition (basic and acidic residues); the sequence is RQRADSERSADRKSQVGSGDRSERIR. Residues 282-309 are disordered; it reads RQRADSERSADRKSQVGSGDRSERIRTY.

It belongs to the prokaryotic/mitochondrial release factor family. Post-translationally, methylated by PrmC. Methylation increases the termination efficiency of RF1.

It is found in the cytoplasm. Its function is as follows. Peptide chain release factor 1 directs the termination of translation in response to the peptide chain termination codons UAG and UAA. This is Peptide chain release factor 1 from Allorhizobium ampelinum (strain ATCC BAA-846 / DSM 112012 / S4) (Agrobacterium vitis (strain S4)).